The following is a 261-amino-acid chain: 3-deoxy-manno-octulosonate cytidylyltransferase (261 aa).

It belongs to the KdsB family.

The protein resides in the cytoplasm. The catalysed reaction is 3-deoxy-alpha-D-manno-oct-2-ulosonate + CTP = CMP-3-deoxy-beta-D-manno-octulosonate + diphosphate. Its pathway is nucleotide-sugar biosynthesis; CMP-3-deoxy-D-manno-octulosonate biosynthesis; CMP-3-deoxy-D-manno-octulosonate from 3-deoxy-D-manno-octulosonate and CTP: step 1/1. It participates in bacterial outer membrane biogenesis; lipopolysaccharide biosynthesis. Its function is as follows. Activates KDO (a required 8-carbon sugar) for incorporation into bacterial lipopolysaccharide in Gram-negative bacteria. The chain is 3-deoxy-manno-octulosonate cytidylyltransferase from Dechloromonas aromatica (strain RCB).